Consider the following 119-residue polypeptide: Beta-2-microglobulin (119 aa).

An N-terminal signal peptide occupies residues 1–20 (MARFVAVALLVLLSLSGLEA). Residues 25-114 (PKIQVYSRHP…VTFSTPKTVK (90 aa)) enclose the Ig-like C1-type domain. C45 and C100 are disulfide-bonded.

The protein belongs to the beta-2-microglobulin family. As to quaternary structure, heterodimer of an alpha chain and a beta chain. Beta-2-microglobulin is the beta-chain of major histocompatibility complex class I molecules.

The protein resides in the secreted. Its function is as follows. Component of the class I major histocompatibility complex (MHC). Involved in the presentation of peptide antigens to the immune system. In Plecturocebus moloch (Dusky titi monkey), this protein is Beta-2-microglobulin (B2M).